Here is an 875-residue protein sequence, read N- to C-terminus: Lysine-specific demethylase JMJ26 (875 aa).

The segment at 31-103 (KPVEATSLSS…RSSVKKRATT (73 aa)) is disordered. The short motif at 62-69 (RKRSKADE) is the Nuclear localization signal element. The segment covering 79–93 (KCDDENKCEENEKKQ) has biased composition (basic and acidic residues). The Zn(2+) site is built by cysteine 193, cysteine 196, cysteine 207, cysteine 210, cysteine 216, cysteine 219, cysteine 236, cysteine 239, cysteine 322, cysteine 325, cysteine 339, and cysteine 347. Residues 193 to 240 (CHQCSKGERRYLFICTFCEVRLYCFPCIKKWYPHLSTDDILEKCPFCR) form an RING-type; degenerate zinc finger. Residues 317–347 (EERVFCNHCATSIVDLHRSCPKCSYELCLNC) form a B box-type; degenerate zinc finger. A JmjC domain is found at 614-837 (PRSGILNIAT…ECLRLTDEFR (224 aa)). 3 residues coordinate Fe cation: histidine 658, aspartate 660, and histidine 805.

It belongs to the JARID1 histone demethylase family. Fe(2+) is required as a cofactor. As to expression, expressed in inflorescences, roots, siliques, leaves and stems.

The protein localises to the nucleus. In terms of biological role, may function as histone H3 lysine demethylase and be involved in regulation of gene expression. This Arabidopsis thaliana (Mouse-ear cress) protein is Lysine-specific demethylase JMJ26.